A 308-amino-acid polypeptide reads, in one-letter code: Tyrosine recombinase XerD (308 aa).

In terms of domain architecture, Core-binding (CB) spans 13–97; that stretch reads PSSTEAIQRF…VFKRFFQWAL (85 aa). In terms of domain architecture, Tyr recombinase spans 118–302; sequence RVPKTLSEAQ…ARERLRTLHA (185 aa). Active-site residues include R158, K183, H254, R257, and H280. The O-(3'-phospho-DNA)-tyrosine intermediate role is filled by Y289.

The protein belongs to the 'phage' integrase family. XerD subfamily. Forms a cyclic heterotetrameric complex composed of two molecules of XerC and two molecules of XerD.

It localises to the cytoplasm. In terms of biological role, site-specific tyrosine recombinase, which acts by catalyzing the cutting and rejoining of the recombining DNA molecules. The XerC-XerD complex is essential to convert dimers of the bacterial chromosome into monomers to permit their segregation at cell division. It also contributes to the segregational stability of plasmids. This is Tyrosine recombinase XerD from Ralstonia nicotianae (strain ATCC BAA-1114 / GMI1000) (Ralstonia solanacearum).